A 549-amino-acid polypeptide reads, in one-letter code: Glucose-6-phosphate isomerase (549 aa).

E355 serves as the catalytic Proton donor. Active-site residues include H386 and K514.

The protein belongs to the GPI family.

The protein resides in the cytoplasm. It catalyses the reaction alpha-D-glucose 6-phosphate = beta-D-fructose 6-phosphate. It participates in carbohydrate biosynthesis; gluconeogenesis. It functions in the pathway carbohydrate degradation; glycolysis; D-glyceraldehyde 3-phosphate and glycerone phosphate from D-glucose: step 2/4. Functionally, catalyzes the reversible isomerization of glucose-6-phosphate to fructose-6-phosphate. In Edwardsiella ictaluri (strain 93-146), this protein is Glucose-6-phosphate isomerase.